The chain runs to 345 residues: Methylthioribose-1-phosphate isomerase (345 aa).

Substrate is bound by residues 47–49 (RGA), Arg90, and Gln197. Residue Asp238 is the Proton donor of the active site. 248 to 249 (NK) is a substrate binding site.

This sequence belongs to the eIF-2B alpha/beta/delta subunits family. MtnA subfamily.

The enzyme catalyses 5-(methylsulfanyl)-alpha-D-ribose 1-phosphate = 5-(methylsulfanyl)-D-ribulose 1-phosphate. It functions in the pathway amino-acid biosynthesis; L-methionine biosynthesis via salvage pathway; L-methionine from S-methyl-5-thio-alpha-D-ribose 1-phosphate: step 1/6. Its function is as follows. Catalyzes the interconversion of methylthioribose-1-phosphate (MTR-1-P) into methylthioribulose-1-phosphate (MTRu-1-P). The polypeptide is Methylthioribose-1-phosphate isomerase (Caldanaerobacter subterraneus subsp. tengcongensis (strain DSM 15242 / JCM 11007 / NBRC 100824 / MB4) (Thermoanaerobacter tengcongensis)).